Here is a 448-residue protein sequence, read N- to C-terminus: UDP-glycosyltransferase 79B5 (448 aa).

UDP-alpha-D-glucose contacts are provided by residues Thr-261, 320-322, 337-345, and 359-362; these read LEQ, HCGFGSMWE, and LADQ.

It belongs to the UDP-glycosyltransferase family.

The sequence is that of UDP-glycosyltransferase 79B5 (UGT79B5) from Arabidopsis thaliana (Mouse-ear cress).